A 115-amino-acid polypeptide reads, in one-letter code: U3-lycotoxin-Ls1n (115 aa).

An N-terminal signal peptide occupies residues 1–20 (MKFVLLFGVLLVTLFSYSSA). Residues 21-44 (EMLDDFDQADEDELLSLIEKEEAR) constitute a propeptide that is removed on maturation. Intrachain disulfides connect Cys-48/Cys-63, Cys-55/Cys-72, Cys-62/Cys-87, and Cys-74/Cys-85.

Belongs to the neurotoxin 19 (CSTX) family. 01 subfamily. Expressed by the venom gland.

The protein localises to the secreted. The polypeptide is U3-lycotoxin-Ls1n (Lycosa singoriensis (Wolf spider)).